The chain runs to 495 residues: Putative myristoylated membrane protein 458R (495 aa).

Gly2 carries the N-myristoyl glycine; by host lipid modification. Asn58, Asn71, Asn72, Asn103, and Asn111 each carry an N-linked (GlcNAc...) asparagine; by host glycan. The stretch at 150–182 (HLKEIHKIITKEVENAKNNNKDVTKLIEQFSQA) forms a coiled coil. A run of 2 helical transmembrane segments spans residues 194 to 214 (ILSL…YVGG) and 216 to 236 (IAFP…FNWT). Asn262, Asn314, Asn317, Asn349, and Asn457 each carry an N-linked (GlcNAc...) asparagine; by host glycan. The helical transmembrane segment at 469–489 (LWLLCVAVILLFIGIIGMGLG) threads the bilayer.

The protein belongs to the IIV-6 118L/458R family.

It is found in the membrane. This chain is Putative myristoylated membrane protein 458R, found in Acheta domesticus (House cricket).